The chain runs to 738 residues: Phosphoribosylformylglycinamidine synthase subunit PurL (738 aa).

The active site involves His-53. The ATP site is built by Tyr-56 and Lys-95. Glu-97 contributes to the Mg(2+) binding site. Substrate contacts are provided by residues 98–101 (SHNH) and Arg-120. His-99 functions as the Proton acceptor in the catalytic mechanism. Asp-121 contributes to the Mg(2+) binding site. Residue Gln-244 coordinates substrate. A Mg(2+)-binding site is contributed by Asp-274. Substrate is bound at residue 318 to 320 (ESQ). Positions 499 and 536 each coordinate ATP. Asn-537 is a binding site for Mg(2+). Ser-539 is a binding site for substrate.

It belongs to the FGAMS family. As to quaternary structure, monomer. Part of the FGAM synthase complex composed of 1 PurL, 1 PurQ and 2 PurS subunits.

The protein resides in the cytoplasm. It catalyses the reaction N(2)-formyl-N(1)-(5-phospho-beta-D-ribosyl)glycinamide + L-glutamine + ATP + H2O = 2-formamido-N(1)-(5-O-phospho-beta-D-ribosyl)acetamidine + L-glutamate + ADP + phosphate + H(+). Its pathway is purine metabolism; IMP biosynthesis via de novo pathway; 5-amino-1-(5-phospho-D-ribosyl)imidazole from N(2)-formyl-N(1)-(5-phospho-D-ribosyl)glycinamide: step 1/2. Part of the phosphoribosylformylglycinamidine synthase complex involved in the purines biosynthetic pathway. Catalyzes the ATP-dependent conversion of formylglycinamide ribonucleotide (FGAR) and glutamine to yield formylglycinamidine ribonucleotide (FGAM) and glutamate. The FGAM synthase complex is composed of three subunits. PurQ produces an ammonia molecule by converting glutamine to glutamate. PurL transfers the ammonia molecule to FGAR to form FGAM in an ATP-dependent manner. PurS interacts with PurQ and PurL and is thought to assist in the transfer of the ammonia molecule from PurQ to PurL. This is Phosphoribosylformylglycinamidine synthase subunit PurL from Lacticaseibacillus paracasei (strain ATCC 334 / BCRC 17002 / CCUG 31169 / CIP 107868 / KCTC 3260 / NRRL B-441) (Lactobacillus paracasei).